The sequence spans 172 residues: Cold-inducible RNA-binding protein (172 aa).

One can recognise an RRM domain in the interval 6–84 (GKLFVGGLSF…RQIRVDQAGK (79 aa)). Residues 69-172 (GKSVDGRQIR…SYDSYATHNE (104 aa)) are disordered. Gly residues-rich tracts occupy residues 93 to 106 (YRGG…FFRG) and 114 to 125 (FSRGGGDRGYGG). A phosphoserine mark is found at Ser-130, Ser-138, Ser-146, Ser-156, Ser-159, and Ser-163. Over residues 138-172 (SRDYYSSRSQSGGYSDRSSGGSYRDSYDSYATHNE) the composition is skewed to low complexity.

As to quaternary structure, interacts with EIF4G1. Associates with ribosomes. In terms of processing, methylated on arginine residues. Methylation of the RGG motifs is a prerequisite for recruitment into SGs. Post-translationally, phosphorylated by CK2, GSK3A and GSK3B. Phosphorylation by GSK3B increases RNA-binding activity to the TXN 3'-UTR transcript upon exposure to UV radiation.

The protein resides in the nucleus. The protein localises to the nucleoplasm. It is found in the cytoplasm. Functionally, cold-inducible mRNA binding protein that plays a protective role in the genotoxic stress response by stabilizing transcripts of genes involved in cell survival. Acts as a translational activator. Seems to play an essential role in cold-induced suppression of cell proliferation. Binds specifically to the 3'-untranslated regions (3'-UTRs) of stress-responsive transcripts RPA2 and TXN. Acts as a translational repressor. Promotes assembly of stress granules (SGs), when overexpressed. This is Cold-inducible RNA-binding protein (CIRBP) from Pongo abelii (Sumatran orangutan).